A 258-amino-acid polypeptide reads, in one-letter code: Diacetyl reductase [(S)-acetoin forming] (258 aa).

8–32 (LVTGGAQGIGFKIAERLVEDGFKVA) provides a ligand contact to NAD(+). Serine 141 contacts substrate. The active-site Proton acceptor is the tyrosine 154. Residue lysine 158 is part of the active site.

The protein belongs to the short-chain dehydrogenases/reductases (SDR) family.

It carries out the reaction (S)-acetoin + NAD(+) = diacetyl + NADH + H(+). Catalyzes the irreversible reduction of 2,3-butanediol to (S)-acetoin in the presence of NADH. In Staphylococcus aureus (strain Mu50 / ATCC 700699), this protein is Diacetyl reductase [(S)-acetoin forming] (butA).